We begin with the raw amino-acid sequence, 382 residues long: Alpha-methylacyl-CoA racemase (382 aa).

Residues R36 and 55-58 (LDLK) each bind substrate. K58 carries the N6-acetyllysine modification. K87 carries the N6-acetyllysine; alternate modification. Position 87 is an N6-succinyllysine; alternate (K87). Position 121–126 (121–126 (GHDINY)) interacts with substrate. H122 serves as the catalytic Proton acceptor. Catalysis depends on D152, which acts as the Proton donor. Residue K268 is modified to N6-succinyllysine. Residues 380 to 382 (ASL) carry the Microbody targeting signal motif.

The protein belongs to the CoA-transferase III family. In terms of assembly, monomer.

Its subcellular location is the peroxisome. The protein resides in the mitochondrion. The catalysed reaction is a (2S)-2-methylacyl-CoA = a (2R)-2-methylacyl-CoA. It carries out the reaction (25R)-3alpha,7alpha,12alpha-trihydroxy-5beta-cholestan-26-oyl-CoA = (25S)-3alpha,7alpha,12alpha-trihydroxy-5beta-cholestan-26-oyl-CoA. It catalyses the reaction (2R,6)-dimethylheptanoyl-CoA = (2S,6)-dimethylheptanoyl-CoA. The protein operates within lipid metabolism; bile acid biosynthesis. It functions in the pathway lipid metabolism; fatty acid metabolism. In terms of biological role, catalyzes the interconversion of (R)- and (S)-stereoisomers of alpha-methyl-branched-chain fatty acyl-CoA esters. Acts only on coenzyme A thioesters, not on free fatty acids, and accepts as substrates a wide range of alpha-methylacyl-CoAs, including pristanoyl-CoA, trihydroxycoprostanoyl-CoA (an intermediate in bile acid synthesis), and arylpropionic acids like the anti-inflammatory drug ibuprofen (2-(4-isobutylphenyl)propionic acid) but neither 3-methyl-branched nor linear-chain acyl-CoAs. The chain is Alpha-methylacyl-CoA racemase (AMACR) from Homo sapiens (Human).